The chain runs to 532 residues: Polyadenylation factor subunit 2 (532 aa).

Residues 50–72 (AGYQPRQQPQGEEDRRPAHRRTV) are disordered. The span at 61-72 (EEDRRPAHRRTV) shows a compositional bias: basic and acidic residues. WD repeat units follow at residues 143-182 (KVRH…FESI), 185-224 (AHES…VNVI), 227-266 (AHRE…NAES), 270-309 (GHGW…NVNT), 312-353 (GFKN…SGSS), 376-416 (GHDS…AGGA), and 432-471 (AHDY…DPTS). Residues 513-532 (NTAQPEVTDDEPVSIPGFAR) form a disordered region.

The protein localises to the nucleus. Required for 3'-end cleavage and polyadenylation of pre-mRNAs. Also involved in chromosome segregation where it has a role in chromosome attachment to the mitotic spindle. The polypeptide is Polyadenylation factor subunit 2 (PFS2) (Yarrowia lipolytica (strain CLIB 122 / E 150) (Yeast)).